A 799-amino-acid chain; its full sequence is DNA ligase (799 aa).

The span at 1–11 (MTEVKTGRVVD) shows a compositional bias: basic and acidic residues. Residues 1–35 (MTEVKTGRVVDDAPVNDAPENNAAEATSPARHDAI) are disordered. NAD(+)-binding positions include 67 to 71 (DAEYD), 116 to 117 (SL), and Asp-147. The active-site N6-AMP-lysine intermediate is the Lys-149. Arg-170, Glu-207, Lys-327, and Lys-351 together coordinate NAD(+). Residues Cys-445, Cys-448, Cys-463, and Cys-468 each contribute to the Zn(2+) site. The BRCT domain occupies 634–723 (AIVLPLQGLK…VASVDASEAV (90 aa)). The tract at residues 720–799 (SEAVAEETPP…RGRAEQLKLF (80 aa)) is disordered. Residues 755-767 (GSASGDDSRGAAA) are compositionally biased toward low complexity. The segment covering 787–799 (DVPRGRAEQLKLF) has biased composition (basic and acidic residues).

This sequence belongs to the NAD-dependent DNA ligase family. LigA subfamily. It depends on Mg(2+) as a cofactor. Mn(2+) serves as cofactor.

It catalyses the reaction NAD(+) + (deoxyribonucleotide)n-3'-hydroxyl + 5'-phospho-(deoxyribonucleotide)m = (deoxyribonucleotide)n+m + AMP + beta-nicotinamide D-nucleotide.. Its function is as follows. DNA ligase that catalyzes the formation of phosphodiester linkages between 5'-phosphoryl and 3'-hydroxyl groups in double-stranded DNA using NAD as a coenzyme and as the energy source for the reaction. It is essential for DNA replication and repair of damaged DNA. This chain is DNA ligase, found in Nitratidesulfovibrio vulgaris (strain ATCC 29579 / DSM 644 / CCUG 34227 / NCIMB 8303 / VKM B-1760 / Hildenborough) (Desulfovibrio vulgaris).